Consider the following 404-residue polypeptide: 2,3-diketo-5-methylthiopentyl-1-phosphate enolase (404 aa).

Catalysis depends on Lys91, which acts as the Proton acceptor. Residues Lys140, 166–169 (KDDE), His257, Gly329, and 351–352 (GG) contribute to the substrate site. Mg(2+) contacts are provided by Lys166, Asp168, and Glu169. Lys166 bears the N6-carboxylysine mark.

Belongs to the RuBisCO large chain family. Type IV subfamily. In terms of assembly, homodimer. Mg(2+) serves as cofactor.

The catalysed reaction is 5-methylsulfanyl-2,3-dioxopentyl phosphate = 2-hydroxy-5-methylsulfanyl-3-oxopent-1-enyl phosphate. It participates in amino-acid biosynthesis; L-methionine biosynthesis via salvage pathway; L-methionine from S-methyl-5-thio-alpha-D-ribose 1-phosphate: step 3/6. In terms of biological role, catalyzes the enolization of 2,3-diketo-5-methylthiopentyl-1-phosphate (DK-MTP-1-P) into 2-hydroxy-3-keto-5-methylthiopentenyl-1-phosphate (HK-MTPenyl-1-P). The sequence is that of 2,3-diketo-5-methylthiopentyl-1-phosphate enolase from Bacillus velezensis (strain DSM 23117 / BGSC 10A6 / LMG 26770 / FZB42) (Bacillus amyloliquefaciens subsp. plantarum).